A 525-amino-acid polypeptide reads, in one-letter code: MGIFFISLVLIVLASVVFFVGGFFLGRYFLERIGTTKILEAEERAVQIVQEAQKEANEYKELKVSEVNQEWKKKRREFDQEVVIKNNKFNQMQKQVLQKEGQLKKQSQDLRDMERKLQDQRKEIEQTMETVNLRSSELERITLEQNQRLESISNLQADEARQMLVDNMLAKAREEATETIHQIHEEAEQQAERLAEKTLLTAIQRISFEQATENALSVVHIQSDELKGRIIGREGRNIKAFENATGVDIIVDDTPEVVILSCFDPLRRELAKLTLQKLLVDGIIHPVAIEKAYEDAKKEIDDVIMSAGEETISSLQIPDMPAEVVGLIGKMKYHTVYGQNLLQHSREVAMLAGLMASELKLDARVAKRAALLHDIGLVLPESDEPHAIAGRNFLKKFNESAVVLNAVAAHHGDVVKESPIAELVDAANVISLSRPGARGAVTADGNVKRLESLEEIAKGFPGVLKTYALQAGREIRVIVEGDNVSDSQADVLAHDIARKIESEVQYPGQIKVSIIRERRSIAYAK.

The helical transmembrane segment at 3–23 (IFFISLVLIVLASVVFFVGGF) threads the bilayer. The region spanning 215–300 (ALSVVHIQSD…KAYEDAKKEI (86 aa)) is the KH domain. The region spanning 341–433 (LLQHSREVAM…VDAANVISLS (93 aa)) is the HD domain.

It belongs to the RNase Y family.

It localises to the cell membrane. Functionally, endoribonuclease that initiates mRNA decay. This chain is Ribonuclease Y, found in Chlorobium phaeobacteroides (strain DSM 266 / SMG 266 / 2430).